Reading from the N-terminus, the 142-residue chain is Large ribosomal subunit protein uL13 (142 aa).

The protein belongs to the universal ribosomal protein uL13 family. In terms of assembly, part of the 50S ribosomal subunit.

Its function is as follows. This protein is one of the early assembly proteins of the 50S ribosomal subunit, although it is not seen to bind rRNA by itself. It is important during the early stages of 50S assembly. The sequence is that of Large ribosomal subunit protein uL13 from Salmonella agona (strain SL483).